Consider the following 160-residue polypeptide: Non-secretory ribonuclease (160 aa).

Positions 1-27 (MVPKLFTSPICLLLLLGLMGVEGSLHA) are cleaved as a signal peptide. Residue tryptophan 34 is glycosylated (C-linked (Man) tryptophan). The active-site Proton acceptor is histidine 42. Asparagine 44 carries an N-linked (GlcNAc...) asparagine glycan. 4 disulfide bridges follow: cysteine 50-cysteine 110, cysteine 64-cysteine 122, cysteine 82-cysteine 137, and cysteine 89-cysteine 98. Tyrosine 60 bears the 3'-nitrotyrosine mark. Residue 65–69 (KNQNT) coordinates substrate. Asparagine 92, asparagine 111, and asparagine 138 each carry an N-linked (GlcNAc...) asparagine glycan. The active-site Proton donor is histidine 155.

It belongs to the pancreatic ribonuclease family. Interacts with and forms a tight 1:1 complex with RNH1. Dimerization of two such complexes may occur.

It localises to the lysosome. The protein localises to the cytoplasmic granule. The enzyme catalyses an [RNA] containing cytidine + H2O = an [RNA]-3'-cytidine-3'-phosphate + a 5'-hydroxy-ribonucleotide-3'-[RNA].. It carries out the reaction an [RNA] containing uridine + H2O = an [RNA]-3'-uridine-3'-phosphate + a 5'-hydroxy-ribonucleotide-3'-[RNA].. Functionally, this is a non-secretory ribonuclease. It is a pyrimidine specific nuclease with a slight preference for U. Cytotoxin and helminthotoxin. Possesses a wide variety of biological activities. The sequence is that of Non-secretory ribonuclease (RNASE2) from Papio hamadryas (Hamadryas baboon).